Consider the following 447-residue polypeptide: Maintenance of mitochondrial morphology protein 1 (447 aa).

The Lumenal portion of the chain corresponds to 1 to 109 (MKSPNETSFT…VFSAWSFAQG (109 aa)). Residues 110 to 130 (LVIGQLSVIVVLIFFIKFFIF) traverse the membrane as a helical segment. Residues 131-447 (SEGPIKTEGP…DDISMKSTDL (317 aa)) lie on the Cytoplasmic side of the membrane. The SMP-LTD domain maps to 208-421 (SPETLDWFNV…EPRFQFIKLP (214 aa)).

This sequence belongs to the MMM1 family. Homodimer. Component of the ER-mitochondria encounter structure (ERMES) or MDM complex, composed of MMM1, MDM10, MDM12 and MDM34. An MMM1 homodimer associates with one molecule of MDM12 on each side in a pairwise head-to-tail manner, and the SMP-LTD domains of MMM1 and MDM12 generate a continuous hydrophobic tunnel for phospholipid trafficking.

The protein localises to the endoplasmic reticulum membrane. Its function is as follows. Component of the ERMES/MDM complex, which serves as a molecular tether to connect the endoplasmic reticulum (ER) and mitochondria. Components of this complex are involved in the control of mitochondrial shape and protein biogenesis, and function in nonvesicular lipid trafficking between the ER and mitochondria. The MDM12-MMM1 subcomplex functions in the major beta-barrel assembly pathway that is responsible for biogenesis of all outer membrane beta-barrel proteins, and acts in a late step after the SAM complex. The MDM10-MDM12-MMM1 subcomplex further acts in the TOM40-specific pathway after the action of the MDM12-MMM1 complex. Essential for establishing and maintaining the structure of mitochondria and maintenance of mtDNA nucleoids. This chain is Maintenance of mitochondrial morphology protein 1, found in Lachancea thermotolerans (strain ATCC 56472 / CBS 6340 / NRRL Y-8284) (Yeast).